We begin with the raw amino-acid sequence, 1331 residues long: DNA-directed RNA polymerase subunit beta' (1331 aa).

Cys-220, Cys-293, Cys-300, and Cys-303 together coordinate Zn(2+). Disordered stretches follow at residues 1236 to 1257 (DFVD…TNDN) and 1294 to 1331 (ISGD…MKDQ). The span at 1243 to 1257 (SRSPNGYSNVVTNDN) shows a compositional bias: polar residues.

Belongs to the RNA polymerase beta' chain family. RpoC2 subfamily. In terms of assembly, in cyanobacteria the RNAP catalytic core is composed of 2 alpha, 1 beta, 1 beta', 1 gamma and 1 omega subunit. When a sigma factor is associated with the core the holoenzyme is formed, which can initiate transcription. Zn(2+) serves as cofactor.

The catalysed reaction is RNA(n) + a ribonucleoside 5'-triphosphate = RNA(n+1) + diphosphate. In terms of biological role, DNA-dependent RNA polymerase catalyzes the transcription of DNA into RNA using the four ribonucleoside triphosphates as substrates. This chain is DNA-directed RNA polymerase subunit beta', found in Picosynechococcus sp. (strain ATCC 27264 / PCC 7002 / PR-6) (Agmenellum quadruplicatum).